A 515-amino-acid polypeptide reads, in one-letter code: Glucose-6-phosphate 1-dehydrogenase X (515 aa).

N-acetylalanine is present on Ala-2. NADP(+) is bound by residues 38-45 (GASGDLAK), Arg-72, Tyr-147, and Lys-171. D-glucose 6-phosphate contacts are provided by residues Lys-171, 201–205 (HYLGK), Glu-239, and Asp-258. The Proton acceptor role is filled by His-263. Residue Arg-357 participates in NADP(+) binding. D-glucose 6-phosphate contacts are provided by Lys-360 and Arg-365. NADP(+) is bound by residues Lys-366, Arg-370, and Arg-393. Residue Gln-395 coordinates D-glucose 6-phosphate. Residues 401–403 (YTK), 421–423 (DLT), Arg-487, and Tyr-503 contribute to the NADP(+) site. Tyr-507 is subject to Phosphotyrosine. Trp-509 contacts NADP(+).

Belongs to the glucose-6-phosphate dehydrogenase family. In terms of assembly, homotetramer; dimer of dimers. Interacts with SIRT2; the interaction is enhanced by H(2)O(2) treatment. Forms a ternary complex with ALDOB and TP53; this interaction is direct. ALDOB stabilizes the complex inhibiting G6PD activity and keeping oxidative pentose phosphate metabolism in check. In terms of processing, acetylated by ELP3 at Lys-403; acetylation inhibits its homodimerization and enzyme activity. Deacetylated by SIRT2 at Lys-403; deacetylation stimulates its enzyme activity.

The protein localises to the cytoplasm. The protein resides in the cytosol. It is found in the membrane. The enzyme catalyses D-glucose 6-phosphate + NADP(+) = 6-phospho-D-glucono-1,5-lactone + NADPH + H(+). The protein operates within carbohydrate degradation; pentose phosphate pathway; D-ribulose 5-phosphate from D-glucose 6-phosphate (oxidative stage): step 1/3. Functionally, catalyzes the rate-limiting step of the oxidative pentose-phosphate pathway, which represents a route for the dissimilation of carbohydrates besides glycolysis. The main function of this enzyme is to provide reducing power (NADPH) and pentose phosphates for fatty acid and nucleic acid synthesis. The sequence is that of Glucose-6-phosphate 1-dehydrogenase X (G6pdx) from Mus musculus (Mouse).